The following is a 238-amino-acid chain: MIDEPASRTALVLFSGGQDSATCLAWALQRFARVETLGFDYGQRHAIELDCRDSLLAGMASLRPDWAKKLGETHTLAIPTLAEISDTALTRNVAIEVSESGLPNTFVPGRNLVFLTFAAALAYRRGVTDIVGGMCETDYSGYPDCRDETIRALRIALNLGMVRQFELHTPLMRLDKGATWSLAHELGGTGLVDLIREHSHTCYLGERGARHAWGYGCGECPACGLRAKGWREYLARIA.

14 to 24 (FSGGQDSATCL) serves as a coordination point for ATP. Cysteine 202, cysteine 217, cysteine 220, and cysteine 223 together coordinate Zn(2+).

It belongs to the QueC family. Zn(2+) is required as a cofactor.

The enzyme catalyses 7-carboxy-7-deazaguanine + NH4(+) + ATP = 7-cyano-7-deazaguanine + ADP + phosphate + H2O + H(+). It functions in the pathway purine metabolism; 7-cyano-7-deazaguanine biosynthesis. Functionally, catalyzes the ATP-dependent conversion of 7-carboxy-7-deazaguanine (CDG) to 7-cyano-7-deazaguanine (preQ(0)). This is 7-cyano-7-deazaguanine synthase from Nitrobacter winogradskyi (strain ATCC 25391 / DSM 10237 / CIP 104748 / NCIMB 11846 / Nb-255).